The following is a 183-amino-acid chain: Threonylcarbamoyl-AMP synthase (183 aa).

A YrdC-like domain is found at 1-183; it reads MNREQIADAL…LRTNQLFRQG (183 aa).

It belongs to the SUA5 family. TsaC subfamily.

The protein resides in the cytoplasm. The enzyme catalyses L-threonine + hydrogencarbonate + ATP = L-threonylcarbamoyladenylate + diphosphate + H2O. Functionally, required for the formation of a threonylcarbamoyl group on adenosine at position 37 (t(6)A37) in tRNAs that read codons beginning with adenine. Catalyzes the conversion of L-threonine, HCO(3)(-)/CO(2) and ATP to give threonylcarbamoyl-AMP (TC-AMP) as the acyladenylate intermediate, with the release of diphosphate. The chain is Threonylcarbamoyl-AMP synthase from Haemophilus influenzae (strain ATCC 51907 / DSM 11121 / KW20 / Rd).